A 520-amino-acid polypeptide reads, in one-letter code: Putative hydrolase Mb2247c (520 aa).

The signal sequence occupies residues 1–34 (MAAMWRRRPLSSALLSFGLLLGGLPLAAPPLAGA). The helical transmembrane segment at 104–124 (FGALLVNPGGPGASAVDMVAA) threads the bilayer. Residues 105-403 (GALLVNPGGP…APTPADPAAW (299 aa)) enclose the AB hydrolase-1 domain. Residue Ser-232 is the Nucleophile of the active site. Asp-461 is an active-site residue. The Proton donor role is filled by His-488.

The protein belongs to the peptidase S33 family.

It is found in the cell membrane. This Mycobacterium bovis (strain ATCC BAA-935 / AF2122/97) protein is Putative hydrolase Mb2247c.